The primary structure comprises 382 residues: Mannitol-1-phosphate 5-dehydrogenase (382 aa).

An NAD(+)-binding site is contributed by Ala-4–Gly-15.

This sequence belongs to the mannitol dehydrogenase family.

It carries out the reaction D-mannitol 1-phosphate + NAD(+) = beta-D-fructose 6-phosphate + NADH + H(+). This chain is Mannitol-1-phosphate 5-dehydrogenase, found in Vibrio parahaemolyticus serotype O3:K6 (strain RIMD 2210633).